The following is a 646-amino-acid chain: Anoctamin-10 (646 aa).

8 consecutive transmembrane segments (helical) span residues 210–230, 241–261, 314–334, 357–377, 404–424, 502–522, 557–577, and 592–612; these read LYFGFLEYFTFALIPMALIGI, DKYVLFAVFNLVWSTVFLEVW, IYLVSVPFVLLCLYLSFYVMM, VLLFVPSIIYAVVIEIMNLLY, VLVFNFVNCFASLFYIAFVMQ, FLLFGYVSLFSCVHPLAAVLV, LAFETMSIIAVVTNCALIALS, and ILTVVAIEHVLLAFKFILAFV.

This sequence belongs to the anoctamin family.

It localises to the membrane. Does not exhibit calcium-activated chloride channel (CaCC) activity. Can inhibit the activity of ANO1. This Danio rerio (Zebrafish) protein is Anoctamin-10 (ano10).